We begin with the raw amino-acid sequence, 650 residues long: Acetyl-coenzyme A synthetase (650 aa).

CoA contacts are provided by residues 191-194, T311, and N335; that span reads RAGR. ATP-binding positions include 387–389, 411–416, D500, and R515; these read GEP and DTWWQT. S523 serves as a coordination point for CoA. Position 526 (R526) interacts with ATP. Residues V537, H539, and V542 each contribute to the Mg(2+) site. A CoA-binding site is contributed by R584. K609 bears the N6-acetyllysine mark.

The protein belongs to the ATP-dependent AMP-binding enzyme family. It depends on Mg(2+) as a cofactor. In terms of processing, acetylated. Deacetylation by the SIR2-homolog deacetylase activates the enzyme.

The enzyme catalyses acetate + ATP + CoA = acetyl-CoA + AMP + diphosphate. Catalyzes the conversion of acetate into acetyl-CoA (AcCoA), an essential intermediate at the junction of anabolic and catabolic pathways. AcsA undergoes a two-step reaction. In the first half reaction, AcsA combines acetate with ATP to form acetyl-adenylate (AcAMP) intermediate. In the second half reaction, it can then transfer the acetyl group from AcAMP to the sulfhydryl group of CoA, forming the product AcCoA. In Shewanella pealeana (strain ATCC 700345 / ANG-SQ1), this protein is Acetyl-coenzyme A synthetase.